A 529-amino-acid polypeptide reads, in one-letter code: MPSKGKDKKKGKSRGKDTKKLIKTDESVVDRAKANASLWEARLEITELSRIEYRDTSRTLAKSNEDLKKKQCKMEKDIMSVLSYLKKQDQEKDNMIEKLKQQLNETKEKAQEEKDKLEQKYTRQIDELEGQFHQKAKEIGMIHTELKAVRQFQRRKIQVERELDDLKENLRNTERIHQETLRRLESRFFEEKHRLKQEAEKKIIMLAERAHHEAVVQLNDAGRNVFKENVYLQKALAYHLKEAGGLQKNSQKLQESHALLLHQKEINDLLIKEKIMQLVQQRSQIQTLQKKVVNLETALGYMTKEFESEVLKLQQHAMIENQAGQVEIDKLQHLLQMKDREMNRVKKLAKNILDERTEVERFFLDALHQVKQQILISRKHYKQIAQAAFNLKMRAACAGRTEYPKIRTFDGREHSTNSVNQDLLEAEKWTHIEGNVDIGDLTWEQKEKVLRLLFAKMNGCPSRKYNQSSKPPVPDYVVSDSGETKEFGDESKLQDKIFITQQIPISDSSGKVVLPTIPKGPQESDTGTF.

Basic residues predominate over residues 1–13 (MPSKGKDKKKGKS). The disordered stretch occupies residues 1-22 (MPSKGKDKKKGKSRGKDTKKLI). Coiled-coil stretches lie at residues 55 to 198 (DTSR…LKQE) and 271 to 361 (IKEK…EVER). Positions 510–529 (GKVVLPTIPKGPQESDTGTF) are disordered.

The protein belongs to the BBOF1 family. As to quaternary structure, interacts with MNS1 and ODF2.

It is found in the cytoplasm. It localises to the cytoskeleton. The protein localises to the cilium basal body. The protein resides in the flagellum axoneme. Functionally, plays an essential role in sperm motility and male fertility by stabilizing the sperm flagellar axonemal structure. May be required for the stability of ODF2 and MANS1 proteins. Dispensable for the assembly and function of motile cilia. This chain is Basal body-orientation factor 1, found in Macaca fascicularis (Crab-eating macaque).